Consider the following 293-residue polypeptide: Methylsterol monooxygenase 1 (293 aa).

The next 2 helical transmembrane spans lie at 55-75 (LIVHEALYFSFCLPGFLFQFI) and 100-120 (VLLFNHFCIQLPLICGTYYFT). The region spanning 145–274 (CAVIEDTWHY…FTWWDRIFGT (130 aa)) is the Fatty acid hydroxylase domain. Positions 157–161 (HRLLH) match the Histidine box-1 motif. The Histidine box-2 motif lies at 170–174 (HKVHH). A helical membrane pass occupies residues 199 to 219 (FFIGIVLLCDHVILLWAWVTI). The Histidine box-3 signature appears at 249 to 255 (HHDFHHM).

It belongs to the sterol desaturase family. The cofactor is Fe cation. In terms of processing, ubiquitinated by MARCHF6, leading to proteasomal degradation.

Its subcellular location is the endoplasmic reticulum membrane. The catalysed reaction is 4,4-dimethyl-5alpha-cholest-7-en-3beta-ol + 6 Fe(II)-[cytochrome b5] + 3 O2 + 5 H(+) = 4alpha-carboxy-4beta-methyl-5alpha-cholest-7-ene-3beta-ol + 6 Fe(III)-[cytochrome b5] + 4 H2O. It catalyses the reaction 4,4-dimethyl-5alpha-cholesta-8,24-dien-3beta-ol + 6 Fe(II)-[cytochrome b5] + 3 O2 + 5 H(+) = 4beta-methylzymosterol-4alpha-carboxylate + 6 Fe(III)-[cytochrome b5] + 4 H2O. It carries out the reaction 4alpha-methylzymosterol + 6 Fe(II)-[cytochrome b5] + 3 O2 + 5 H(+) = 4alpha-carboxyzymosterol + 6 Fe(III)-[cytochrome b5] + 4 H2O. The enzyme catalyses 4alpha-methyl-5alpha-cholest-7-en-3beta-ol + 6 Fe(II)-[cytochrome b5] + 3 O2 + 5 H(+) = 4alpha-carboxy-5alpha-cholest-7-en-3beta-ol + 6 Fe(III)-[cytochrome b5] + 4 H2O. The catalysed reaction is 4,4-dimethyl-5alpha-cholest-8-en-3beta-ol + 6 Fe(II)-[cytochrome b5] + 3 O2 + 5 H(+) = 4alpha-carboxy-4beta-methyl-5alpha-cholest-8-en-3beta-ol + 6 Fe(III)-[cytochrome b5] + 4 H2O. It catalyses the reaction 4alpha-methyl-5alpha-cholest-8-en-3beta-ol + 6 Fe(II)-[cytochrome b5] + 3 O2 + 5 H(+) = 4alpha-carboxy-5alpha-cholest-8-ene-3beta-ol + 6 Fe(III)-[cytochrome b5] + 4 H2O. The protein operates within steroid biosynthesis; zymosterol biosynthesis; zymosterol from lanosterol: step 3/6. It participates in steroid biosynthesis; cholesterol biosynthesis. Its function is as follows. Catalyzes the three-step monooxygenation required for the demethylation of 4,4-dimethyl and 4alpha-methylsterols, which can be subsequently metabolized to cholesterol. In Macaca fascicularis (Crab-eating macaque), this protein is Methylsterol monooxygenase 1 (MSMO1).